We begin with the raw amino-acid sequence, 194 residues long: Holliday junction branch migration complex subunit RuvA (194 aa).

The segment at Met1–Ala64 is domain I. Residues Thr65–Ala143 form a domain II region. The interval Ala144 to Ala147 is flexible linker. Residues Ala147–Lys194 are domain III.

This sequence belongs to the RuvA family. As to quaternary structure, homotetramer. Forms an RuvA(8)-RuvB(12)-Holliday junction (HJ) complex. HJ DNA is sandwiched between 2 RuvA tetramers; dsDNA enters through RuvA and exits via RuvB. An RuvB hexamer assembles on each DNA strand where it exits the tetramer. Each RuvB hexamer is contacted by two RuvA subunits (via domain III) on 2 adjacent RuvB subunits; this complex drives branch migration. In the full resolvosome a probable DNA-RuvA(4)-RuvB(12)-RuvC(2) complex forms which resolves the HJ.

The protein localises to the cytoplasm. Its function is as follows. The RuvA-RuvB-RuvC complex processes Holliday junction (HJ) DNA during genetic recombination and DNA repair, while the RuvA-RuvB complex plays an important role in the rescue of blocked DNA replication forks via replication fork reversal (RFR). RuvA specifically binds to HJ cruciform DNA, conferring on it an open structure. The RuvB hexamer acts as an ATP-dependent pump, pulling dsDNA into and through the RuvAB complex. HJ branch migration allows RuvC to scan DNA until it finds its consensus sequence, where it cleaves and resolves the cruciform DNA. In Neisseria meningitidis serogroup C / serotype 2a (strain ATCC 700532 / DSM 15464 / FAM18), this protein is Holliday junction branch migration complex subunit RuvA.